Reading from the N-terminus, the 208-residue chain is Probable GTP-binding protein EngB (208 aa).

Residues 23 to 205 (LTSEMVILGR…RQTLLKYLLT (183 aa)) enclose the EngB-type G domain. Residues 31–38 (GRSNVGKS), 57–61 (GKTRL), 84–87 (DLPG), 154–157 (TKFD), and 182–184 (FNA) contribute to the GTP site. Mg(2+) contacts are provided by S38 and T59.

Belongs to the TRAFAC class TrmE-Era-EngA-EngB-Septin-like GTPase superfamily. EngB GTPase family. Mg(2+) is required as a cofactor.

Necessary for normal cell division and for the maintenance of normal septation. This Helicobacter pylori (strain HPAG1) protein is Probable GTP-binding protein EngB.